Consider the following 226-residue polypeptide: Ribonuclease 3 (226 aa).

The RNase III domain occupies 6–128 (INRLQRKLGY…LIGGVFLDSD (123 aa)). Glu-41 lines the Mg(2+) pocket. Asp-45 is an active-site residue. Mg(2+) is bound by residues Asp-114 and Glu-117. Glu-117 is a catalytic residue. The region spanning 155–225 (DPKTRLQEYL…AEQALKKLEL (71 aa)) is the DRBM domain.

Belongs to the ribonuclease III family. Homodimer. The cofactor is Mg(2+).

It localises to the cytoplasm. It carries out the reaction Endonucleolytic cleavage to 5'-phosphomonoester.. In terms of biological role, digests double-stranded RNA. Involved in the processing of primary rRNA transcript to yield the immediate precursors to the large and small rRNAs (23S and 16S). Processes some mRNAs, and tRNAs when they are encoded in the rRNA operon. Processes pre-crRNA and tracrRNA of type II CRISPR loci if present in the organism. The chain is Ribonuclease 3 from Escherichia coli O139:H28 (strain E24377A / ETEC).